The chain runs to 1073 residues: Probable lipase MIL1 (1073 aa).

2 disordered regions span residues 1–151 (MSDS…AVSS) and 163–190 (LTSK…KSVN). Basic and acidic residues-rich tracts occupy residues 54 to 81 (QAKE…EAGK) and 101 to 121 (GIDR…HDTD). The short motif at 143–147 (WQEMP) is the APM2-interacting WQEMP motif element. N-linked (GlcNAc...) asparagine glycosylation is found at N190, N229, and N236. The segment at 230–267 (SSQTSVNLTSSPSTTSLNNEKNNDDDDDDSYDEYEDDV) is disordered. The span at 233-249 (TSVNLTSSPSTTSLNNE) shows a compositional bias: low complexity. Residues 252–267 (NDDDDDDSYDEYEDDV) are compositionally biased toward acidic residues. N280 carries an N-linked (GlcNAc...) asparagine glycan. A helical membrane pass occupies residues 292–312 (FAYVGAINILANQMCTNLATL). The segment at 385-448 (NPWENDRDHE…SDVPGKVLDP (64 aa)) is disordered. Positions 404-427 (RMSPNEQNGSVQASTPDPEQSATP) are enriched in polar residues. A glycan (N-linked (GlcNAc...) asparagine) is linked at N411. S435 is subject to Phosphoserine. The chain crosses the membrane as a helical span at residues 457 to 477 (LNIDVAWTIICDLFLICLQSS). N495 carries N-linked (GlcNAc...) asparagine glycosylation. Helical transmembrane passes span 553 to 573 (LVLG…IAAG) and 577 to 597 (IGIT…VVAV). N726 carries N-linked (GlcNAc...) asparagine glycosylation. A helical transmembrane segment spans residues 818–838 (WFLAYLFRAAAGGFSAVMGIS). N850 is a glycosylation site (N-linked (GlcNAc...) asparagine). Disordered stretches follow at residues 942 to 968 (GRDM…EGIA) and 1010 to 1073 (KEVE…PDDI). Pro residues predominate over residues 1027–1037 (PSTPKINPPQS). S1037 bears the Phosphoserine mark.

This sequence belongs to the TMCO4 family. In terms of assembly, interacts with RPP0. Interacts with APM2.

The protein localises to the golgi apparatus membrane. The protein resides in the early endosome membrane. Its subcellular location is the cytoplasmic vesicle. It is found in the clathrin-coated vesicle membrane. Probable lipase that recruits the AP-1-related (AP-1R) complex to membranes via interaction with APM2. The AP-1R complex is an adapter protein complex that mediates of cargo protein SNC1 sorting in clathrin-coated vesicles. This chain is Probable lipase MIL1, found in Saccharomyces cerevisiae (strain ATCC 204508 / S288c) (Baker's yeast).